We begin with the raw amino-acid sequence, 118 residues long: Large ribosomal subunit protein bL20 (118 aa).

This sequence belongs to the bacterial ribosomal protein bL20 family.

In terms of biological role, binds directly to 23S ribosomal RNA and is necessary for the in vitro assembly process of the 50S ribosomal subunit. It is not involved in the protein synthesizing functions of that subunit. This chain is Large ribosomal subunit protein bL20, found in Oceanobacillus iheyensis (strain DSM 14371 / CIP 107618 / JCM 11309 / KCTC 3954 / HTE831).